We begin with the raw amino-acid sequence, 525 residues long: Putative ribose/galactose/methyl galactoside import ATP-binding protein (525 aa).

Residues 1 to 20 are disordered; sequence MSGSATASPPAKPDLPSSDG. ABC transporter domains follow at residues 33–269 and 279–523; these read LEIS…VGRE and KPAG…SGHR. 65-72 serves as a coordination point for ATP; that stretch reads GENGAGKS.

Belongs to the ABC transporter superfamily. Carbohydrate importer 2 (CUT2) (TC 3.A.1.2) family.

The protein localises to the cell inner membrane. It carries out the reaction D-ribose(out) + ATP + H2O = D-ribose(in) + ADP + phosphate + H(+). The catalysed reaction is D-galactose(out) + ATP + H2O = D-galactose(in) + ADP + phosphate + H(+). In terms of biological role, part of an ABC transporter complex involved in carbohydrate import. Could be involved in ribose, galactose and/or methyl galactoside import. Responsible for energy coupling to the transport system. This chain is Putative ribose/galactose/methyl galactoside import ATP-binding protein, found in Pseudomonas syringae pv. tomato (strain ATCC BAA-871 / DC3000).